Here is a 412-residue protein sequence, read N- to C-terminus: Serine hydroxymethyltransferase (412 aa).

(6S)-5,6,7,8-tetrahydrofolate is bound by residues Leu-119 and 123–125 (GHL). The residue at position 228 (Lys-228) is an N6-(pyridoxal phosphate)lysine.

Belongs to the SHMT family. Homodimer. Pyridoxal 5'-phosphate is required as a cofactor.

The protein localises to the cytoplasm. It catalyses the reaction (6R)-5,10-methylene-5,6,7,8-tetrahydrofolate + glycine + H2O = (6S)-5,6,7,8-tetrahydrofolate + L-serine. Its pathway is one-carbon metabolism; tetrahydrofolate interconversion. The protein operates within amino-acid biosynthesis; glycine biosynthesis; glycine from L-serine: step 1/1. In terms of biological role, catalyzes the reversible interconversion of serine and glycine with tetrahydrofolate (THF) serving as the one-carbon carrier. This reaction serves as the major source of one-carbon groups required for the biosynthesis of purines, thymidylate, methionine, and other important biomolecules. Also exhibits THF-independent aldolase activity toward beta-hydroxyamino acids, producing glycine and aldehydes, via a retro-aldol mechanism. In Thermodesulfovibrio yellowstonii (strain ATCC 51303 / DSM 11347 / YP87), this protein is Serine hydroxymethyltransferase.